The sequence spans 535 residues: BAR/IMD domain-containing adapter protein 2 (535 aa).

The 250-residue stretch at 1–250 (MSLSRSEEMH…VQLMQQMANS (250 aa)) folds into the IMD domain. Positions 88-153 (NQLEETLKSF…LRKKSQGSKN (66 aa)) form a coiled coil. Ser-262, Ser-324, Ser-326, and Ser-337 each carry phosphoserine. A disordered region spans residues 299–370 (VMNGVAGPDS…TLPRSSSMAA (72 aa)). Residues 321–335 (QPKSLSPPQSQSKLS) are compositionally biased toward low complexity. Position 341 is a phosphothreonine (Thr-341). At Ser-347 the chain carries Phosphoserine. Over residues 349–368 (TPKNSYATTENKTLPRSSSM) the composition is skewed to polar residues. Thr-361 is modified (phosphothreonine). Residues Ser-367, Ser-385, Ser-396, and Ser-455 each carry the phosphoserine modification. Residues 375–438 (NGRMRVKAIF…PFSYTRVLDS (64 aa)) enclose the SH3 domain. A disordered region spans residues 445 to 477 (HMSLQQGKSSSTGNLLDKDDLALPPPDYGTSSR). Residues 447-458 (SLQQGKSSSTGN) are compositionally biased toward polar residues.

As to quaternary structure, homodimer. Interacts with CDC42 and RAC1 that have been activated by GTP binding. Binds DIAPH1. Interacts with ATN1, ADGRB1, SHANK1, SHANK2, SHANK3, TIAM1, WASF1 and WASF2. Interacts with ENAH after recruitment of CDC42. Interacts with EPS8. Phosphorylated on tyrosine residues by INSR in response to insulin treatment. Detected in liver, brain, olfactory bulb, brain cortex, caudate putamen, hypothalamus and cerebellum.

Its subcellular location is the cytoplasm. The protein localises to the membrane. It is found in the cell projection. It localises to the filopodium. The protein resides in the ruffle. Its subcellular location is the cytoskeleton. Its function is as follows. Adapter protein that links membrane-bound small G-proteins to cytoplasmic effector proteins. Necessary for CDC42-mediated reorganization of the actin cytoskeleton and for RAC1-mediated membrane ruffling. Involved in the regulation of the actin cytoskeleton by WASF family members and the Arp2/3 complex. Plays a role in neurite growth. Acts syngeristically with ENAH to promote filipodia formation. Plays a role in the reorganization of the actin cytoskeleton in response to bacterial infection. Participates in actin bundling when associated with EPS8, promoting filopodial protrusions. This chain is BAR/IMD domain-containing adapter protein 2 (Baiap2), found in Mus musculus (Mouse).